Here is a 329-residue protein sequence, read N- to C-terminus: Red chlorophyll catabolite reductase 1, chloroplastic (329 aa).

Positions 1-11 (MLQLRSPPPAT) are enriched in pro residues. A chloroplast-targeting transit peptide spans 1 to 50 (MLQLRSPPPATSSPSSAVSFPTLAPRLLPLRRRRRGAGSQLGGKTSSAVR). The tract at residues 1–61 (MLQLRSPPPA…SSAAAPGATE (61 aa)) is disordered. Low complexity-rich tracts occupy residues 12–28 (SSPS…PRLL) and 46–59 (SSAV…APGA). Red chlorophyll catabolite-binding positions include glutamate 163, 216–218 (YRS), and aspartate 299.

In terms of tissue distribution, expressed in leaves. Expressed at low levels in roots, stems, panicles and seeds.

It localises to the plastid. It is found in the chloroplast. It catalyses the reaction primary fluorescent chlorophyll catabolite + 2 oxidized [2Fe-2S]-[ferredoxin] = red chlorophyll catabolite + 2 reduced [2Fe-2S]-[ferredoxin] + 3 H(+). The protein operates within porphyrin-containing compound metabolism; chlorophyll degradation. Its function is as follows. Catalyzes the key reaction of chlorophyll catabolism, porphyrin macrocycle cleavage of pheophorbide a (pheide a) to a primary fluorescent catabolite (pFCC). Works in a two-step reaction with pheophorbide a oxygenase (PaO) by reducing the C20/C1 double bond of the intermediate, RCC. Belongs to the chlorophyll catabolic enzymes (CCEs). May play a role in senescence and response to wounding. In Oryza sativa subsp. japonica (Rice), this protein is Red chlorophyll catabolite reductase 1, chloroplastic.